The following is a 354-amino-acid chain: Selenide, water dikinase (354 aa).

Sec21 is an active-site residue. Position 21 (Sec21) is a non-standard amino acid, selenocysteine. ATP is bound by residues Lys24 and 51–53; that span reads TSD. Asp54 contributes to the Mg(2+) binding site. Residues Asp71, Asp94, and 141–143 contribute to the ATP site; that span reads GHT. Asp94 contacts Mg(2+). Asp229 serves as a coordination point for Mg(2+).

Belongs to the selenophosphate synthase 1 family. Class I subfamily. In terms of assembly, homodimer. It depends on Mg(2+) as a cofactor.

It carries out the reaction hydrogenselenide + ATP + H2O = selenophosphate + AMP + phosphate + 2 H(+). In terms of biological role, synthesizes selenophosphate from selenide and ATP. The polypeptide is Selenide, water dikinase (Treponema denticola (strain ATCC 35405 / DSM 14222 / CIP 103919 / JCM 8153 / KCTC 15104)).